We begin with the raw amino-acid sequence, 616 residues long: Auxin efflux carrier component 4 (616 aa).

Topologically, residues 1–7 (MITWHDL) are extracellular. Residues 8 to 28 (YTVLTAVVPLYVAMILAYGSV) form a helical membrane-spanning segment. At 29-38 (QWWKIFSPDQ) the chain is on the cytoplasmic side. Residues 39-59 (CSGINRFVAIFAVPLLSFHFI) form a helical membrane-spanning segment. Val-51 lines the (indol-3-yl)acetate pocket. Over 60 to 70 (STNDPYAMNFR) the chain is Extracellular. The chain crosses the membrane as a helical span at residues 71-91 (FVAADTLQKIIMLVLLALWAN). The Cytoplasmic segment spans residues 92–101 (LTKNGSLEWM). Residues 102 to 122 (ITIFSLSTLPNTLVMGIPLLI) traverse the membrane as a helical segment. The (indol-3-yl)acetate site is built by Asn-112 and Leu-114. Topologically, residues 123–131 (AMYGTYAGS) are extracellular. A helical membrane pass occupies residues 132-152 (LMVQVVVLQCIIWYTLLLFLF). Tyr-145 contributes to the (indol-3-yl)acetate binding site. Residues 153-476 (EYRGAKLLIM…LIRNPNTYSS (324 aa)) lie on the Cytoplasmic side of the membrane. Phosphoserine is present on residues Ser-223, Ser-240, and Ser-280. Residues 302-343 (AAGSYPAPNPEFSTGTGVSTKPNKIPKENQQQLQEKDSKASH) form a disordered region. The span at 312 to 334 (EFSTGTGVSTKPNKIPKENQQQL) shows a compositional bias: polar residues. Ser-358 and Ser-395 each carry phosphoserine. The tract at residues 390-411 (DQPRKSNARGGGDDIGGLDSGE) is disordered. Residues 398–409 (RGGGDDIGGLDS) are compositionally biased toward gly residues. Residues 477–497 (LIGLIWALVAYRWHVAMPKIL) traverse the membrane as a helical segment. Over 498–500 (QQS) the chain is Extracellular. A helical transmembrane segment spans residues 501–521 (ISILSDAGLGMAMFSLGLFMA). The Cytoplasmic segment spans residues 522 to 535 (LQPKIIACGNSVAT). The chain crosses the membrane as a helical span at residues 536–556 (FAMAVRFITGPAIMAVAGIAI). Over 557–561 (GLHGD) the chain is Extracellular. Residues 562–582 (LLRIAIVQAALPQGIVPFVFA) form a helical membrane-spanning segment. Ile-576 and Val-577 together coordinate (indol-3-yl)acetate. At 583–595 (KEYNVHPTILSTG) the chain is on the cytoplasmic side. The chain crosses the membrane as a helical span at residues 596 to 616 (VIFGMLIALPITLVYYILLGL).

It belongs to the auxin efflux carrier (TC 2.A.69.1) family. As to quaternary structure, homodimer. Expressed in the quiescent center precursors and surrounding cells. Present in columella cells of primary roots. Detected in pollen.

It localises to the cell membrane. Functionally, acts as a component of the auxin efflux carrier. Plays a role in generating a sink for auxin into columella cells. Maintains the endogenous auxin gradient, which is essential for correct root patterning. Involved in EXO70A3-regulated gravitropic responses in columella cells and in root system architecture (RSA). Together with PIN3 and PIN7, involved in the connective auxin transport (CAT) that ensures communication across the shoot system, and modulates strigolactone-mediated shoot branching control. The abcb19 pin3 pin4 pin7 quadruple mutant exhibits an additive phenotype on strigolactone-mediated bud outgrowth responses and shoot branching control. This is Auxin efflux carrier component 4 from Arabidopsis thaliana (Mouse-ear cress).